Reading from the N-terminus, the 588-residue chain is Probable basic-leucine zipper transcription factor M (588 aa).

A coiled-coil region spans residues 127-157 (QVEQQQEQEQEQEQQQKQQQQQYIEKQIQEI). Over residues 221–240 (QQNHIDNQSLNNSNTKTSKN) the composition is skewed to low complexity. Positions 221-250 (QQNHIDNQSLNNSNTKTSKNQQKDNNLPKK) are disordered. In terms of domain architecture, bZIP spans 263–326 (NNNNIEKKRD…GSNLMRPEPE (64 aa)). The tract at residues 269–289 (KKRDQTESSKNFREKKKEYVK) is basic motif. The segment at 291–312 (IESKILALTLENDKLKKENDSL) is leucine-zipper.

This sequence belongs to the bZIP family.

The protein localises to the nucleus. Probable transcriptional regulator. This Dictyostelium discoideum (Social amoeba) protein is Probable basic-leucine zipper transcription factor M (bzpM).